Here is an 88-residue protein sequence, read N- to C-terminus: uncharacterized protein (88 aa).

As to expression, expressed in a wide variety of tissues.

This is an uncharacterized protein from Homo sapiens (Human).